The primary structure comprises 524 residues: Sexual development regulator velC (524 aa).

4 disordered regions span residues asparagine 114–serine 195, proline 322–tyrosine 349, valine 380–arginine 413, and glycine 503–glutamate 524. Polar residues-rich tracts occupy residues threonine 131–glycine 153 and leucine 178–serine 195. The Velvet domain maps to serine 248–arginine 500. Over residues proline 393 to aspartate 402 the composition is skewed to polar residues.

It belongs to the velvet family. VelC subfamily. As to quaternary structure, interacts with vosA.

The protein localises to the nucleus. In terms of biological role, velvet-domain-containing protein that acts as a positive regulator of sexual development. Positively regulates the production of the sexual fruiting bodies called cleistothecia. In Emericella nidulans (strain FGSC A4 / ATCC 38163 / CBS 112.46 / NRRL 194 / M139) (Aspergillus nidulans), this protein is Sexual development regulator velC.